Consider the following 155-residue polypeptide: UPF0225 protein ECA2332 (155 aa).

It belongs to the UPF0225 family.

This Pectobacterium atrosepticum (strain SCRI 1043 / ATCC BAA-672) (Erwinia carotovora subsp. atroseptica) protein is UPF0225 protein ECA2332.